A 567-amino-acid chain; its full sequence is Laccase-3 (567 aa).

Residues 1–24 form the signal peptide; that stretch reads MASSSSSRLLFLLSCSVLALLAGA. Plastocyanin-like domains follow at residues 32–148 and 158–310; these read IVQE…PREN and REVP…YDCG. N-linked (GlcNAc...) asparagine glycosylation is present at N78. 4 residues coordinate Cu cation: H82, H84, H127, and H129. Residues N148, N187, N203, N298, N330, N379, and N389 are each glycosylated (N-linked (GlcNAc...) asparagine). The Plastocyanin-like 3 domain maps to 415–551; it reads DFPAYPPVQF…AMAFLVEDGY (137 aa). Cu cation-binding residues include H468, H471, H473, H530, C531, H532, and H536.

Belongs to the multicopper oxidase family. Requires Cu cation as cofactor.

It is found in the secreted. Its subcellular location is the extracellular space. The protein resides in the apoplast. The enzyme catalyses 4 hydroquinone + O2 = 4 benzosemiquinone + 2 H2O. In terms of biological role, lignin degradation and detoxification of lignin-derived products. This chain is Laccase-3 (LAC3), found in Oryza sativa subsp. japonica (Rice).